We begin with the raw amino-acid sequence, 138 residues long: Small ribosomal subunit protein uS11c (138 aa).

It belongs to the universal ribosomal protein uS11 family. As to quaternary structure, part of the 30S ribosomal subunit.

It is found in the plastid. The protein is Small ribosomal subunit protein uS11c of Cuscuta gronovii (Common dodder).